The primary structure comprises 197 residues: Putative rho GDP-dissociation inhibitor 1 (197 aa).

The protein belongs to the Rho GDI family. Interacts with rac1A, rac1B, rac1C, racB, raCC and RacE.

The protein localises to the cytoplasm. Functionally, regulates the GDP/GTP exchange reaction of the Rho proteins by inhibiting the dissociation of GDP from them, and the subsequent binding of GTP to them. Regulates the Rac-dependent signaling pathways controlling cytokinesis, actin reorganization and the contractile vacuole. Required for efficient accumulation of cap at the cell cortex. The protein is Putative rho GDP-dissociation inhibitor 1 (rdiA) of Dictyostelium discoideum (Social amoeba).